The chain runs to 265 residues: Histone H1 (265 aa).

Over residues 1-27 (MATEEPIVAVETVPEPIVTEPTTITEP) the composition is skewed to low complexity. Disordered stretches follow at residues 1–66 (MATE…PTYE), 131–226 (AAKK…TTPG), and 242–265 (VKSV…GGRK). Residues 29 to 42 (VPEKEEPKAEVEKT) show a composition bias toward basic and acidic residues. A compositionally biased stretch (basic residues) spans 43–55 (KKAKGSKPKKASK). An H15 domain is found at 61–130 (SHPTYEEMIK…KVKGSFKLSA (70 aa)). Residues 140–171 (PKAKTAAKAKSVKAKPAAKPKAKAVVKPKVAS) show a composition bias toward basic residues. The segment covering 186-202 (KPKTVAAKTKPTAAKPK) has biased composition (low complexity). Over residues 203-215 (AVVKPKSKVKPAK) the composition is skewed to basic residues. Positions 216–226 (VAKTSVKTTPG) are enriched in low complexity.

This sequence belongs to the histone H1/H5 family.

The protein localises to the nucleus. Its subcellular location is the chromosome. Histones H1 are necessary for the condensation of nucleosome chains into higher-order structures. This Pisum sativum (Garden pea) protein is Histone H1.